We begin with the raw amino-acid sequence, 370 residues long: Translocating chain-associated membrane protein 2 (370 aa).

The Cytoplasmic portion of the chain corresponds to 1–22; sequence MAFRRRTKSYPLFSQEFIIHNH. A helical transmembrane segment spans residues 23-43; that stretch reads ADIGFCLVLCVLIGLMFEVTA. Residues 44–75 are Extracellular-facing; the sequence is KTAFLFILPQYNISVPTADSETVHYHYGPKDL. Residue Asn-55 is glycosylated (N-linked (GlcNAc...) asparagine). The helical transmembrane segment at 76–96 threads the bilayer; sequence VTILFYVVITIIFHAVVQEYI. Topologically, residues 97–119 are cytoplasmic; sequence LDKISKRLHLSKVKHSKFNESGQ. The 210-residue stretch at 112–321 folds into the TLC domain; the sequence is SKFNESGQLL…HSQLRHWREY (210 aa). A helical membrane pass occupies residues 120–140; the sequence is LLVFHLSAVAWCFYVIVTEGY. Topologically, residues 141–159 are extracellular; that stretch reads LTNPRSLWEDYPHVYLSFQ. A helical transmembrane segment spans residues 160 to 180; that stretch reads VKFFYLGQLAYWLHSLPELYF. Topologically, residues 181–191 are cytoplasmic; that stretch reads QKVRKEEVPRQ. The helical transmembrane segment at 192-209 threads the bilayer; sequence LQYICLYLLHITGAYLLN. Topologically, residues 210–214 are extracellular; it reads LSRLG. A helical membrane pass occupies residues 215 to 235; the sequence is LILLLLQYSTEALFHMARLFH. At 236–250 the chain is on the cytoplasmic side; sequence FADENNERLFNAWAA. Residues 251-271 traverse the membrane as a helical segment; sequence VFGVTRLFILTLAVLTIGFGL. Residues 272–287 are Extracellular-facing; sequence ARVENQVFDPEKGNFN. A helical transmembrane segment spans residues 288-308; the sequence is TLPCRLGMLLLVCVAQAWLMW. Residues 309–370 are Cytoplasmic-facing; the sequence is RFIHSQLRHW…SSRTKKLKSP (62 aa). The interval 332-370 is disordered; sequence SAVPRPPAKLLKREPGYHENGVVKAENGTSSRTKKLKSP.

Belongs to the TRAM family. As to quaternary structure, interacts with COL1A1. Interacts with SERCA2B.

Its subcellular location is the membrane. Its function is as follows. Necessary for collagen type I synthesis. May couple the activity of the ER Ca(2+) pump SERCA2B with the activity of the translocon. This coupling may increase the local Ca(2+) concentration at the site of collagen synthesis, and a high Ca(2+) concentration may be necessary for the function of molecular chaperones involved in collagen folding. Required for proper insertion of the first transmembrane helix N-terminus of TM4SF20 into the ER lumen, may act as a ceramide sensor for regulated alternative translocation (RAT). The sequence is that of Translocating chain-associated membrane protein 2 (Tram2) from Mus musculus (Mouse).